A 149-amino-acid chain; its full sequence is Putative oligosaccharyltransferase complex subunit CG9662 (149 aa).

The Cytoplasmic segment spans residues 1 to 32 (MIETLYNLPFHILVPPNIKVRRFSIPMPSPMA). The helical transmembrane segment at 33-53 (VFSVILFSYFLVTGGIIYDVI) threads the bilayer. The Extracellular segment spans residues 54–83 (VEPPSLGATVDEHGHSRPVAFMPYRVNGQY). A helical membrane pass occupies residues 84 to 104 (IMEGLASSFLFTVGGLGFIIM). Residues 105 to 117 (DQTHTPGKTNLNR) are Cytoplasmic-facing. A helical membrane pass occupies residues 118–138 (LLLTAMGFIFILVSFFTTWLF). Topologically, residues 139–149 (MRMKLPSYLQP) are extracellular.

It belongs to the OSTC family. As to quaternary structure, component of the oligosaccharyltransferase (OST) complex.

The protein localises to the membrane. Its function is as follows. Subunit of the oligosaccharyl transferase (OST) complex that catalyzes the initial transfer of a defined glycan (Glc(3)Man(9)GlcNAc(2) in eukaryotes) from the lipid carrier dolichol-pyrophosphate to an asparagine residue within an Asn-X-Ser/Thr consensus motif in nascent polypeptide chains, the first step in protein N-glycosylation. N-glycosylation occurs cotranslationally and the complex associates with the Sec61 complex at the channel-forming translocon complex that mediates protein translocation across the endoplasmic reticulum (ER). All subunits are required for a maximal enzyme activity. This chain is Putative oligosaccharyltransferase complex subunit CG9662, found in Drosophila melanogaster (Fruit fly).